The sequence spans 355 residues: Mitochondrial import inner membrane translocase subunit TIM50 (355 aa).

Residues 1-44 (MAASAAVFLRLRSGLRQGARGLCARLATPPPRAPDQAAEIGSRA) constitute a mitochondrion transit peptide. Residues 25–61 (RLATPPPRAPDQAAEIGSRAGTKAQTQGPQQQRSSEG) form a disordered region. Over 45-67 (GTKAQTQGPQQQRSSEGPSYAKK) the chain is Mitochondrial matrix. Polar residues predominate over residues 47-61 (KAQTQGPQQQRSSEG). A helical membrane pass occupies residues 68–88 (VALWLARLLGAGGTVSVIYIF). Over 89–355 (GNNAVDENGA…SRLWPRSKQP (267 aa)) the chain is Mitochondrial intermembrane. An FCP1 homology domain is found at 145-288 (YYQPPYTLVL…LDLSAFLKTI (144 aa)). Ser-343 bears the Phosphoserine mark.

This sequence belongs to the TIM50 family. Component of the TIM23 complex at least composed of TIMM23, TIMM17 (TIMM17A or TIMM17B) and TIMM50; within this complex, directly interacts with TIMM23. The complex interacts with the TIMM44 component of the PAM complex and with DNAJC15.

It localises to the mitochondrion inner membrane. Essential component of the TIM23 complex, a complex that mediates the translocation of transit peptide-containing proteins across the mitochondrial inner membrane. Has some phosphatase activity in vitro; however such activity may not be relevant in vivo. The polypeptide is Mitochondrial import inner membrane translocase subunit TIM50 (TIMM50) (Bos taurus (Bovine)).